Reading from the N-terminus, the 783-residue chain is Rabenosyn-5 (783 aa).

N-acetylalanine is present on A2. Residue S3 is modified to Phosphoserine. The C2H2-type zinc-finger motif lies at F14–H37. The tract at residues R99–E262 is necessary for the correct targeting to endosomes. The FYVE-type zinc finger occupies D156 to L259. C162, C165, C178, C181, C186, and C189 together coordinate Zn(2+). The segment covering K206–H223 has biased composition (polar residues). The interval K206–L240 is disordered. Phosphoserine is present on residues S214, S218, S225, and S229. Residues R227 to V239 show a composition bias toward low complexity. 2 residues coordinate Zn(2+): C251 and C254. The interval Q263–Q499 is necessary for interaction with RAB4A. Residues Q263 to N783 are necessary for interaction with EHD1. Coiled coils occupy residues T377 to E412 and Q471 to R531. Composition is skewed to basic and acidic residues over residues K387–E399 and E405–Q414. The tract at residues K387–P433 is disordered. A UIM domain is found at Y495–E514. Disordered regions lie at residues S569–E638 and F663–I733. Composition is skewed to polar residues over residues S571–A584 and T610–A623. The interval P627–N783 is necessary for interaction with RAB5A. A compositionally biased stretch (acidic residues) spans F663 to A673. Phosphoserine is present on S686. Positions V721–I733 are enriched in acidic residues.

Interacts with EHD1, RAB4A, RAB5A, RAB22A, RAB24 and VPS45. Binds simultaneously to RAB4A and RAB5A in vitro. Interacts with RAB4A and RAB5A that has been activated by GTP binding.

It is found in the cell membrane. The protein localises to the early endosome membrane. Its function is as follows. Rab4/Rab5 effector protein acting in early endocytic membrane fusion and membrane trafficking of recycling endosomes. Required for endosome fusion either homotypically or with clathrin coated vesicles. Plays a role in the lysosomal trafficking of CTSD/cathepsin D from the Golgi to lysosomes. Also promotes the recycling of transferrin directly from early endosomes to the plasma membrane. Binds phospholipid vesicles containing phosphatidylinositol 3-phosphate (PtdInsP3). Plays a role in the recycling of transferrin receptor to the plasma membrane. This chain is Rabenosyn-5, found in Mus musculus (Mouse).